The primary structure comprises 219 residues: Small ribosomal subunit protein uS3c (219 aa).

The KH type-2 domain maps to Ile-43–Thr-120.

The protein belongs to the universal ribosomal protein uS3 family. In terms of assembly, part of the 30S ribosomal subunit.

Its subcellular location is the plastid. The protein resides in the chloroplast. The polypeptide is Small ribosomal subunit protein uS3c (rps3) (Oenothera elata subsp. hookeri (Hooker's evening primrose)).